The following is a 304-amino-acid chain: Acetylglutamate kinase (304 aa).

Substrate is bound by residues 72 to 73 (GG), Arg94, and Asn199.

The protein belongs to the acetylglutamate kinase family. ArgB subfamily.

The protein localises to the cytoplasm. It catalyses the reaction N-acetyl-L-glutamate + ATP = N-acetyl-L-glutamyl 5-phosphate + ADP. Its pathway is amino-acid biosynthesis; L-arginine biosynthesis; N(2)-acetyl-L-ornithine from L-glutamate: step 2/4. Its function is as follows. Catalyzes the ATP-dependent phosphorylation of N-acetyl-L-glutamate. This Methylobacterium nodulans (strain LMG 21967 / CNCM I-2342 / ORS 2060) protein is Acetylglutamate kinase.